Consider the following 406-residue polypeptide: Vacuole membrane protein 1 (406 aa).

Residues 1-22 (MAENGTDCEQRRVGMPKEQNNG) are disordered. Topologically, residues 1–42 (MAENGTDCEQRRVGMPKEQNNGSFQDPSFMCNRKRRDREERQ) are cytoplasmic. Residues 43–63 (SIVLWRKPLITLQYFILEVLI) traverse the membrane as a helical segment. Residues 64–76 (NLKEWSVRLWHRR) lie on the Extracellular side of the membrane. Residues 77 to 97 (MMVVSVLLLLAVLSVAYYIEG) traverse the membrane as a helical segment. The Cytoplasmic segment spans residues 98 to 110 (EHQQCVQYIEKKC). The helical transmembrane segment at 111–131 (LWCAYWVGLGILSSVGLGTGL) threads the bilayer. Topologically, residues 132 to 250 (HTFLLYLGPH…ATRAKLTVQN (119 aa)) are extracellular. A VTT domain region spans residues 173-316 (GTEGAISLWT…FVIITFSKHI (144 aa)). A helical membrane pass occupies residues 251-271 (LVQKVGFLGILACASIPNPLF). Topologically, residues 272-273 (DL) are cytoplasmic. Residues 274–294 (AGITCGHFLVPFWTFFGATLI) traverse the membrane as a helical segment. At 295 to 306 (GKAIIKMHIQKL) the chain is on the extracellular side. Residues 307–327 (FVIITFSKHIVEQMVSLIGVI) traverse the membrane as a helical segment. Residues 328-363 (PSIGPSLQKPFQEYLEAQRKKLHHKGDSGTPQSENW) are Cytoplasmic-facing. Residues 364–384 (LSWAFEKLVIIMVFYFILSII) form a helical membrane-spanning segment. The Extracellular segment spans residues 385–406 (NSMAQSYAKRVQQKKLSVEKTK).

Belongs to the VMP1 family.

It is found in the endoplasmic reticulum-Golgi intermediate compartment membrane. The protein localises to the cell membrane. Its subcellular location is the vacuole membrane. It localises to the endoplasmic reticulum membrane. It carries out the reaction a 1,2-diacyl-sn-glycero-3-phospho-L-serine(in) = a 1,2-diacyl-sn-glycero-3-phospho-L-serine(out). The catalysed reaction is cholesterol(in) = cholesterol(out). It catalyses the reaction a 1,2-diacyl-sn-glycero-3-phosphocholine(in) = a 1,2-diacyl-sn-glycero-3-phosphocholine(out). The enzyme catalyses a 1,2-diacyl-sn-glycero-3-phosphoethanolamine(in) = a 1,2-diacyl-sn-glycero-3-phosphoethanolamine(out). Its function is as follows. Phospholipid scramblase involved in lipid homeostasis and membrane dynamics processes. Has phospholipid scramblase activity toward cholesterol and phosphatidylserine, as well as phosphatidylethanolamine and phosphatidylcholine. Required for autophagosome formation: participates in early stages of autophagosome biogenesis at the endoplasmic reticulum (ER) membrane by reequilibrating the leaflets of the ER as lipids are extracted by atg2 (atg2a or atg2b) to mediate autophagosome assembly. In addition to autophagy, involved in other processes in which phospholipid scramblase activity is required. Modulates ER contacts with lipid droplets, mitochondria and endosomes. This is Vacuole membrane protein 1 from Xenopus laevis (African clawed frog).